The following is a 236-amino-acid chain: Purine nucleoside phosphorylase DeoD-type 1 (236 aa).

Residue His5 coordinates a purine D-ribonucleoside. Phosphate is bound by residues Gly21, Arg25, Arg44, and 88–91; that span reads RVGS. Residues 180-182 and 204-205 each bind a purine D-ribonucleoside; these read EME and TD. Asp205 acts as the Proton donor in catalysis.

It belongs to the PNP/UDP phosphorylase family. As to quaternary structure, homohexamer; trimer of homodimers.

The catalysed reaction is a purine D-ribonucleoside + phosphate = a purine nucleobase + alpha-D-ribose 1-phosphate. It catalyses the reaction a purine 2'-deoxy-D-ribonucleoside + phosphate = a purine nucleobase + 2-deoxy-alpha-D-ribose 1-phosphate. Functionally, catalyzes the reversible phosphorolytic breakdown of the N-glycosidic bond in the beta-(deoxy)ribonucleoside molecules, with the formation of the corresponding free purine bases and pentose-1-phosphate. This is Purine nucleoside phosphorylase DeoD-type 1 from Shewanella oneidensis (strain ATCC 700550 / JCM 31522 / CIP 106686 / LMG 19005 / NCIMB 14063 / MR-1).